Here is a 90-residue protein sequence, read N- to C-terminus: Probable Fe(2+)-trafficking protein (90 aa).

The protein belongs to the Fe(2+)-trafficking protein family.

Could be a mediator in iron transactions between iron acquisition and iron-requiring processes, such as synthesis and/or repair of Fe-S clusters in biosynthetic enzymes. The protein is Probable Fe(2+)-trafficking protein of Albidiferax ferrireducens (strain ATCC BAA-621 / DSM 15236 / T118) (Rhodoferax ferrireducens).